The following is a 305-amino-acid chain: Homoserine O-acetyltransferase (305 aa).

The active-site Acyl-thioester intermediate is the Cys142. Residues Lys163 and Ser192 each coordinate substrate. His235 (proton acceptor) is an active-site residue. Residue Glu237 is part of the active site. Arg249 contacts substrate.

This sequence belongs to the MetA family.

The protein resides in the cytoplasm. The catalysed reaction is L-homoserine + acetyl-CoA = O-acetyl-L-homoserine + CoA. It participates in amino-acid biosynthesis; L-methionine biosynthesis via de novo pathway; O-acetyl-L-homoserine from L-homoserine: step 1/1. Transfers an acetyl group from acetyl-CoA to L-homoserine, forming acetyl-L-homoserine. This chain is Homoserine O-acetyltransferase, found in Bacteroides thetaiotaomicron (strain ATCC 29148 / DSM 2079 / JCM 5827 / CCUG 10774 / NCTC 10582 / VPI-5482 / E50).